Here is a 111-residue protein sequence, read N- to C-terminus: Large ribosomal subunit protein uL22 (111 aa).

This sequence belongs to the universal ribosomal protein uL22 family. Part of the 50S ribosomal subunit.

This protein binds specifically to 23S rRNA; its binding is stimulated by other ribosomal proteins, e.g. L4, L17, and L20. It is important during the early stages of 50S assembly. It makes multiple contacts with different domains of the 23S rRNA in the assembled 50S subunit and ribosome. In terms of biological role, the globular domain of the protein is located near the polypeptide exit tunnel on the outside of the subunit, while an extended beta-hairpin is found that lines the wall of the exit tunnel in the center of the 70S ribosome. This is Large ribosomal subunit protein uL22 from Acholeplasma laidlawii.